The chain runs to 642 residues: Cysteine-rich receptor-like protein kinase 27 (642 aa).

The N-terminal stretch at 1–24 (MASTSIMLSSFFSFFFLTFFVTYA) is a signal peptide. Over 25–274 (QQNVTVHTIC…QGKSKDRSKT (250 aa)) the chain is Extracellular. Residues Asn27, Asn40, Asn44, Asn70, Asn145, Asn173, and Asn258 are each glycosylated (N-linked (GlcNAc...) asparagine). Gnk2-homologous domains lie at 29 to 130 (TVHT…SRII) and 136 to 240 (PVPF…VYPF). The chain crosses the membrane as a helical span at residues 275-295 (LIFAVVPIVAIILGLVFLFIY). Topologically, residues 296–642 (LKRRRKKKTL…DVSLTDLSAR (347 aa)) are cytoplasmic. Residues 333-620 (FSLTNKIGEG…QLPKPSQPGF (288 aa)) enclose the Protein kinase domain. Residues 339 to 347 (IGEGGFGVV) and Lys361 contribute to the ATP site. Tyr406 carries the phosphotyrosine modification. Catalysis depends on Asp458, which acts as the Proton acceptor. Residue Ser462 is modified to Phosphoserine. The residue at position 498 (Thr498) is a Phosphothreonine. Tyr506 is modified (phosphotyrosine).

It belongs to the protein kinase superfamily. Ser/Thr protein kinase family. CRK subfamily.

The protein resides in the membrane. The catalysed reaction is L-seryl-[protein] + ATP = O-phospho-L-seryl-[protein] + ADP + H(+). It carries out the reaction L-threonyl-[protein] + ATP = O-phospho-L-threonyl-[protein] + ADP + H(+). This chain is Cysteine-rich receptor-like protein kinase 27 (CRK27), found in Arabidopsis thaliana (Mouse-ear cress).